The primary structure comprises 293 residues: tRNA pseudouridine synthase B (293 aa).

Residue Asp39 is the Nucleophile of the active site.

The protein belongs to the pseudouridine synthase TruB family. Type 1 subfamily.

The catalysed reaction is uridine(55) in tRNA = pseudouridine(55) in tRNA. Functionally, responsible for synthesis of pseudouridine from uracil-55 in the psi GC loop of transfer RNAs. The sequence is that of tRNA pseudouridine synthase B from Rickettsia bellii (strain RML369-C).